The chain runs to 309 residues: Cytidine deaminase (309 aa).

2 consecutive CMP/dCMP-type deaminase domains span residues 48 to 168 and 200 to 309; these read DEDA…FGPR and DDND…SLSL. A substrate-binding site is contributed by 89–91; the sequence is NME. His102 serves as a coordination point for Zn(2+). The Proton donor role is filled by Glu104. Residues Cys129 and Cys132 each coordinate Zn(2+).

It belongs to the cytidine and deoxycytidylate deaminase family. As to quaternary structure, homodimer. Zn(2+) is required as a cofactor.

The catalysed reaction is cytidine + H2O + H(+) = uridine + NH4(+). The enzyme catalyses 2'-deoxycytidine + H2O + H(+) = 2'-deoxyuridine + NH4(+). In terms of biological role, this enzyme scavenges exogenous and endogenous cytidine and 2'-deoxycytidine for UMP synthesis. This is Cytidine deaminase from Sodalis glossinidius (strain morsitans).